Here is a 198-residue protein sequence, read N- to C-terminus: CASP-like protein 1U1 (198 aa).

At methionine 1 to asparagine 30 the chain is on the cytoplasmic side. The chain crosses the membrane as a helical span at residues leucine 31–alanine 51. Residues threonine 52 to lysine 73 are Extracellular-facing. Residues tryptophan 74–cysteine 94 traverse the membrane as a helical segment. Over cysteine 95–aspartate 117 the chain is Cytoplasmic. Residues phenylalanine 118–alanine 138 traverse the membrane as a helical segment. Residues arginine 139 to glutamine 165 are Extracellular-facing. The helical transmembrane segment at glycine 166 to alanine 186 threads the bilayer. Residues serine 187–histidine 198 are Cytoplasmic-facing.

It belongs to the Casparian strip membrane proteins (CASP) family. In terms of assembly, homodimer and heterodimers.

The protein localises to the cell membrane. In Physcomitrium patens (Spreading-leaved earth moss), this protein is CASP-like protein 1U1.